The sequence spans 466 residues: L-seryl-tRNA(Sec) selenium transferase (466 aa).

K294 carries the N6-(pyridoxal phosphate)lysine modification.

This sequence belongs to the SelA family. Requires pyridoxal 5'-phosphate as cofactor.

The protein resides in the cytoplasm. The enzyme catalyses L-seryl-tRNA(Sec) + selenophosphate + H(+) = L-selenocysteinyl-tRNA(Sec) + phosphate. Its pathway is aminoacyl-tRNA biosynthesis; selenocysteinyl-tRNA(Sec) biosynthesis; selenocysteinyl-tRNA(Sec) from L-seryl-tRNA(Sec) (bacterial route): step 1/1. Functionally, converts seryl-tRNA(Sec) to selenocysteinyl-tRNA(Sec) required for selenoprotein biosynthesis. This chain is L-seryl-tRNA(Sec) selenium transferase, found in Carboxydothermus hydrogenoformans (strain ATCC BAA-161 / DSM 6008 / Z-2901).